The chain runs to 253 residues: Sulfate transporter CysZ (253 aa).

Helical transmembrane passes span 31–51, 75–95, 151–171, and 222–242; these read FVILPLLVNILLMGGAFWWLF, LLWPLAVISVLLVFGYFFSTI, IVLLILYLIPGIGQTVAPVLW, and IPLLNLFIMPVAVCGATAMWV.

It belongs to the CysZ family.

The protein resides in the cell inner membrane. Functionally, high affinity, high specificity proton-dependent sulfate transporter, which mediates sulfate uptake. Provides the sulfur source for the cysteine synthesis pathway. The polypeptide is Sulfate transporter CysZ (Escherichia coli (strain 55989 / EAEC)).